Here is a 203-residue protein sequence, read N- to C-terminus: Urease accessory protein UreE (203 aa).

The tract at residues 170 to 203 (EHHGHSHSHSHSHSHDHDHQHGPSCSHGHHHGHR) is disordered.

It belongs to the UreE family.

The protein resides in the cytoplasm. Its function is as follows. Involved in urease metallocenter assembly. Binds nickel. Probably functions as a nickel donor during metallocenter assembly. The protein is Urease accessory protein UreE of Burkholderia mallei (strain SAVP1).